The primary structure comprises 908 residues: Translation initiation factor IF-2 (908 aa).

Residues 52–318 form a disordered region; that stretch reads QSHGQEEKRR…RSSQSSQHKF (267 aa). Over residues 65 to 84 the composition is skewed to polar residues; it reads KSKTTSTARVTGSSGKSKSV. Basic and acidic residues-rich tracts occupy residues 94–108, 120–138, 176–185, 193–238, 270–280, and 294–303; these read FEKP…ELAA, AAKD…EERQ, IEVKPKDQPK, PKVE…EQMR, SFEKERREIKR, and KNQDEREIKN. The region spanning 409–578 is the tr-type G domain; sequence TRPPVVTIMG…SLQAELMELE (170 aa). Residues 418–425 are G1; it reads GHVDHGKT. 418–425 lines the GTP pocket; that stretch reads GHVDHGKT. A G2 region spans residues 443–447; the sequence is GITQH. The interval 464-467 is G3; it reads DTPG. GTP-binding positions include 464 to 468 and 518 to 521; these read DTPGH and NKMD. A G4 region spans residues 518–521; sequence NKMD. Residues 554–556 form a G5 region; that stretch reads SAK.

Belongs to the TRAFAC class translation factor GTPase superfamily. Classic translation factor GTPase family. IF-2 subfamily.

The protein localises to the cytoplasm. In terms of biological role, one of the essential components for the initiation of protein synthesis. Protects formylmethionyl-tRNA from spontaneous hydrolysis and promotes its binding to the 30S ribosomal subunits. Also involved in the hydrolysis of GTP during the formation of the 70S ribosomal complex. This chain is Translation initiation factor IF-2, found in Psychrobacter cryohalolentis (strain ATCC BAA-1226 / DSM 17306 / VKM B-2378 / K5).